We begin with the raw amino-acid sequence, 88 residues long: ATP synthase subunit c 1 (88 aa).

2 helical membrane passes run F4 to I24 and I53 to L73.

Belongs to the ATPase C chain family. In terms of assembly, F-type ATPases have 2 components, F(1) - the catalytic core - and F(0) - the membrane proton channel. F(1) has five subunits: alpha(3), beta(3), gamma(1), delta(1), epsilon(1). F(0) has three main subunits: a(1), b(2) and c(10-14). The alpha and beta chains form an alternating ring which encloses part of the gamma chain. F(1) is attached to F(0) by a central stalk formed by the gamma and epsilon chains, while a peripheral stalk is formed by the delta and b chains.

The protein resides in the cell inner membrane. In terms of biological role, f(1)F(0) ATP synthase produces ATP from ADP in the presence of a proton or sodium gradient. F-type ATPases consist of two structural domains, F(1) containing the extramembraneous catalytic core and F(0) containing the membrane proton channel, linked together by a central stalk and a peripheral stalk. During catalysis, ATP synthesis in the catalytic domain of F(1) is coupled via a rotary mechanism of the central stalk subunits to proton translocation. Its function is as follows. Key component of the F(0) channel; it plays a direct role in translocation across the membrane. A homomeric c-ring of between 10-14 subunits forms the central stalk rotor element with the F(1) delta and epsilon subunits. The protein is ATP synthase subunit c 1 of Syntrophotalea carbinolica (strain DSM 2380 / NBRC 103641 / GraBd1) (Pelobacter carbinolicus).